A 348-amino-acid polypeptide reads, in one-letter code: NADH-quinone oxidoreductase subunit H (348 aa).

The next 8 helical transmembrane spans lie at 10–30 (LPLF…LVLI), 82–102 (GVFL…WAVV), 115–135 (VGLL…IMGG), 161–181 (IGFV…TTIV), 199–219 (LLDW…ISAL), 251–271 (LFFL…TILF), 287–307 (VPGV…FAMV), and 322–342 (LGWK…AAIL).

It belongs to the complex I subunit 1 family. As to quaternary structure, NDH-1 is composed of 14 different subunits. Subunits NuoA, H, J, K, L, M, N constitute the membrane sector of the complex.

It localises to the cell inner membrane. The enzyme catalyses a quinone + NADH + 5 H(+)(in) = a quinol + NAD(+) + 4 H(+)(out). NDH-1 shuttles electrons from NADH, via FMN and iron-sulfur (Fe-S) centers, to quinones in the respiratory chain. The immediate electron acceptor for the enzyme in this species is believed to be ubiquinone. Couples the redox reaction to proton translocation (for every two electrons transferred, four hydrogen ions are translocated across the cytoplasmic membrane), and thus conserves the redox energy in a proton gradient. This subunit may bind ubiquinone. This is NADH-quinone oxidoreductase subunit H from Bartonella bacilliformis (strain ATCC 35685 / KC583 / Herrer 020/F12,63).